The following is a 490-amino-acid chain: Betaine aldehyde dehydrogenase (490 aa).

3 residues coordinate K(+): Thr26, Ile27, and Asp93. Position 150–152 (150–152 (GAW)) interacts with NAD(+). Lys162 acts as the Charge relay system in catalysis. 176-179 (KPSE) is an NAD(+) binding site. Val180 is a binding site for K(+). 230–233 (GVAS) contacts NAD(+). Residue Leu246 participates in K(+) binding. The Proton acceptor role is filled by Glu252. Residues Gly254, Cys286, and Glu387 each coordinate NAD(+). Cys286 acts as the Nucleophile in catalysis. Cys286 carries the cysteine sulfenic acid (-SOH) modification. K(+) is bound by residues Lys457 and Gly460. Catalysis depends on Glu464, which acts as the Charge relay system.

The protein belongs to the aldehyde dehydrogenase family. In terms of assembly, dimer of dimers. Requires K(+) as cofactor.

It carries out the reaction betaine aldehyde + NAD(+) + H2O = glycine betaine + NADH + 2 H(+). It functions in the pathway amine and polyamine biosynthesis; betaine biosynthesis via choline pathway; betaine from betaine aldehyde: step 1/1. Involved in the biosynthesis of the osmoprotectant glycine betaine. Catalyzes the irreversible oxidation of betaine aldehyde to the corresponding acid. This Escherichia coli (strain 55989 / EAEC) protein is Betaine aldehyde dehydrogenase.